The chain runs to 202 residues: ATP-dependent Clp protease proteolytic subunit 3 (202 aa).

Catalysis depends on Ser-93, which acts as the Nucleophile. His-118 is a catalytic residue.

Belongs to the peptidase S14 family. Fourteen ClpP subunits assemble into 2 heptameric rings which stack back to back to give a disk-like structure with a central cavity, resembling the structure of eukaryotic proteasomes.

It is found in the cytoplasm. It catalyses the reaction Hydrolysis of proteins to small peptides in the presence of ATP and magnesium. alpha-casein is the usual test substrate. In the absence of ATP, only oligopeptides shorter than five residues are hydrolyzed (such as succinyl-Leu-Tyr-|-NHMec, and Leu-Tyr-Leu-|-Tyr-Trp, in which cleavage of the -Tyr-|-Leu- and -Tyr-|-Trp bonds also occurs).. In terms of biological role, cleaves peptides in various proteins in a process that requires ATP hydrolysis. Has a chymotrypsin-like activity. Plays a major role in the degradation of misfolded proteins. This Rhodococcus jostii (strain RHA1) protein is ATP-dependent Clp protease proteolytic subunit 3.